Here is a 268-residue protein sequence, read N- to C-terminus: Peptide transport system ATP-binding protein SapF (268 aa).

The ABC transporter domain occupies 6–251; the sequence is LEVRNLSKTF…PLHELTRRLI (246 aa). 47–54 is a binding site for ATP; that stretch reads GENGSGKS.

Belongs to the ABC transporter superfamily.

It localises to the cell inner membrane. Involved in a peptide intake transport system that plays a role in the resistance to antimicrobial peptides. The polypeptide is Peptide transport system ATP-binding protein SapF (Salmonella typhimurium (strain LT2 / SGSC1412 / ATCC 700720)).